We begin with the raw amino-acid sequence, 622 residues long: Apical membrane antigen 1 (622 aa).

An N-terminal signal peptide occupies residues 1–24 (MRKLYCVLLLSAFEFTYMINFGRG). Residues 25–546 (QNYWEHPYQK…EHKPTYDKMK (522 aa)) lie on the Extracellular side of the membrane. Disulfide bonds link cysteine 149–cysteine 302, cysteine 217–cysteine 247, cysteine 263–cysteine 275, cysteine 320–cysteine 418, and cysteine 337–cysteine 409. Residue asparagine 162 is glycosylated (N-linked (GlcNAc...) asparagine). Asparagine 286, asparagine 371, asparagine 421, asparagine 422, and asparagine 499 each carry an N-linked (GlcNAc...) asparagine glycan. 3 disulfide bridges follow: cysteine 443/cysteine 502, cysteine 490/cysteine 507, and cysteine 492/cysteine 509. The helical transmembrane segment at 547 to 567 (IIIASSAAVAVLATILMVYLY) threads the bilayer. Over 568–622 (KRKGNAEKYDKMDEPQHYGKSNSRNDEMLDPEASFWGEEKRASHTTPVLMEKPYY) the chain is Cytoplasmic. Positions 578–594 (KMDEPQHYGKSNSRNDE) are enriched in basic and acidic residues. The interval 578–607 (KMDEPQHYGKSNSRNDEMLDPEASFWGEEK) is disordered.

Belongs to the apicomplexan parasites AMA1 family.

The protein localises to the membrane. Its function is as follows. Involved in parasite invasion of erythrocytes. In Plasmodium falciparum (isolate FC27 / Papua New Guinea), this protein is Apical membrane antigen 1 (AMA-1).